Consider the following 354-residue polypeptide: UDP-3-O-acylglucosamine N-acyltransferase (354 aa).

His257 (proton acceptor) is an active-site residue. Residues 335 to 354 are disordered; that stretch reads AQQVSKSKLRGRNPGGKQND.

It belongs to the transferase hexapeptide repeat family. LpxD subfamily. In terms of assembly, homotrimer.

The catalysed reaction is a UDP-3-O-[(3R)-3-hydroxyacyl]-alpha-D-glucosamine + a (3R)-hydroxyacyl-[ACP] = a UDP-2-N,3-O-bis[(3R)-3-hydroxyacyl]-alpha-D-glucosamine + holo-[ACP] + H(+). The protein operates within bacterial outer membrane biogenesis; LPS lipid A biosynthesis. Functionally, catalyzes the N-acylation of UDP-3-O-acylglucosamine using 3-hydroxyacyl-ACP as the acyl donor. Is involved in the biosynthesis of lipid A, a phosphorylated glycolipid that anchors the lipopolysaccharide to the outer membrane of the cell. The sequence is that of UDP-3-O-acylglucosamine N-acyltransferase from Rhizobium etli (strain ATCC 51251 / DSM 11541 / JCM 21823 / NBRC 15573 / CFN 42).